The primary structure comprises 404 residues: MVILSKVAAVAVGLSTVASALPTGPSHSPHARRGFTINQITRQTARVGPKTASFPAIYSRALAKYGGTVPAHLKSAVASGHGTVVTSPEPNDIEYLTPVNIGGTTLNLDFDTGSADLWVFSEELPKSEQTGHDVYKPSGNASKIAGASWDISYGDGSSASGDVYQDTVTVGGVTAQGQAVEAASKISDQFVQDKNNDGLLGLAFSSINTVKPKPQTTFFDTVKDQLDAPLFAVTLKYHAPGSYDFGFIDKSKFTGELAYADVDDSQGFWQFTADGYSVGKGDAQKAPITGIADTGTTLVMLDDEIVDAYYKQVQGAKNDASAGGYVFPCETELPEFTVVIGSYNAVIPGKHINYAPLQEGSSTCVGGIQSNSGLGLSILGDVFLKSQYVVFDSQGPRLGFAAQA.

The signal sequence occupies residues 1–20; it reads MVILSKVAAVAVGLSTVASA. The propeptide at 21 to 77 is activation peptide; that stretch reads LPTGPSHSPHARRGFTINQITRQTARVGPKTASFPAIYSRALAKYGGTVPAHLKSAV. Residues 95-401 form the Peptidase A1 domain; the sequence is YLTPVNIGGT…DSQGPRLGFA (307 aa). Asp111 is a catalytic residue. N-linked (GlcNAc...) asparagine glycosylation is present at Asn140. Residue Asp293 is part of the active site. Cys329 and Cys364 are oxidised to a cystine.

This sequence belongs to the peptidase A1 family. As to quaternary structure, monomer.

The protein resides in the secreted. It carries out the reaction Hydrolysis of proteins with broad specificity. Generally favors hydrophobic residues in P1 and P1', but also accepts Lys in P1, which leads to activation of trypsinogen. Does not clot milk.. Functionally, secreted aspartic endopeptidase that allows assimilation of proteinaceous substrates. The scissile peptide bond is attacked by a nucleophilic water molecule activated by two aspartic residues in the active site. Shows a broad primary substrate specificity. Favors hydrophobic residues at the P1 and P1' positions, but also accepts a lysine residue in the P1 position, leading to the activation of trypsinogen and chymotrypsinogen A. This is Aspergillopepsin-1 (pepA) from Aspergillus flavus (strain ATCC 200026 / FGSC A1120 / IAM 13836 / NRRL 3357 / JCM 12722 / SRRC 167).